A 345-amino-acid chain; its full sequence is Phosphoribosylformylglycinamidine cyclo-ligase (345 aa).

Belongs to the AIR synthase family.

The protein localises to the cytoplasm. It carries out the reaction 2-formamido-N(1)-(5-O-phospho-beta-D-ribosyl)acetamidine + ATP = 5-amino-1-(5-phospho-beta-D-ribosyl)imidazole + ADP + phosphate + H(+). It participates in purine metabolism; IMP biosynthesis via de novo pathway; 5-amino-1-(5-phospho-D-ribosyl)imidazole from N(2)-formyl-N(1)-(5-phospho-D-ribosyl)glycinamide: step 2/2. The polypeptide is Phosphoribosylformylglycinamidine cyclo-ligase (Escherichia coli O139:H28 (strain E24377A / ETEC)).